Reading from the N-terminus, the 515-residue chain is Ent-isokaurene C2/C3-hydroxylase (515 aa).

A helical transmembrane segment spans residues 5–25 (LILDLCLSALFVVVLSKLVSS). A heme-binding site is contributed by C452.

It belongs to the cytochrome P450 family. Heme is required as a cofactor.

The protein resides in the membrane. The enzyme catalyses ent-isokaurene + 2 reduced [NADPH--hemoprotein reductase] + 2 O2 = ent-isokaurene-2beta,3beta-diol + 2 oxidized [NADPH--hemoprotein reductase] + 2 H2O + 2 H(+). Its function is as follows. Enzyme of the diterpenoid metabolism involved in the biosynthesis of antibacterial oryzalides such as phytocassane. In Oryza sativa subsp. japonica (Rice), this protein is Ent-isokaurene C2/C3-hydroxylase (CYP71Z6).